The following is a 406-amino-acid chain: Vacuole membrane protein 1 (406 aa).

A compositionally biased stretch (basic and acidic residues) spans 1 to 20 (MAENGKNCDQRRIAMSKDQH). The disordered stretch occupies residues 1–37 (MAENGKNCDQRRIAMSKDQHNGSLTDPSSVHEKKRRD). Residue Ala2 is modified to N-acetylalanine. Topologically, residues 2–77 (AENGKNCDQR…WTSKLWHRQS (76 aa)) are cytoplasmic. Residues 78 to 98 (IVVSFLLLLAALVATYYVEGA) form a helical membrane-spanning segment. Topologically, residues 99 to 109 (HQQYVQRIEKQ) are extracellular. A helical transmembrane segment spans residues 110–130 (FLLYAYWIGLGILSSVGLGTG). The Cytoplasmic segment spans residues 131 to 250 (LHTFLLYLGP…ASRAKLAVQK (120 aa)). Positions 173–316 (GAEGAISLWS…FVIVTFSKHI (144 aa)) are VTT domain. The chain crosses the membrane as a helical span at residues 251-271 (LVQKVGFFGILACASIPNPLF). Residues 272–273 (DL) lie on the Extracellular side of the membrane. The chain crosses the membrane as a helical span at residues 274-294 (AGITCGHFLVPFWTFFGATLI). Over 295 to 305 (GKAIIKMHIQK) the chain is Cytoplasmic. Residues 306–326 (IFVIVTFSKHIVEQMVTFIGA) traverse the membrane as a helical segment. At 327-363 (VPGIGPSLQKPFQEYLEAQRQKLHHRSEAGTPQGENW) the chain is on the extracellular side. A helical transmembrane segment spans residues 364–384 (LSWMFEKLVVAMVCYFVLSII). The Cytoplasmic portion of the chain corresponds to 385-406 (NSMAQNYAKRIQQRLNSEEKTK).

The protein belongs to the VMP1 family. Interacts with BECN1. Interacts with TJP1. Interacts with TP53INP2. Interacts with TMEM41B. Interacts with ATP2A2, PLN and SLN; competes with PLN and SLN to prevent them from forming an inhibitory complex with ATP2A2. Interacts with ATG2A.

It is found in the endoplasmic reticulum-Golgi intermediate compartment membrane. The protein resides in the cell membrane. The protein localises to the vacuole membrane. Its subcellular location is the endoplasmic reticulum membrane. It catalyses the reaction a 1,2-diacyl-sn-glycero-3-phospho-L-serine(in) = a 1,2-diacyl-sn-glycero-3-phospho-L-serine(out). The enzyme catalyses cholesterol(in) = cholesterol(out). The catalysed reaction is a 1,2-diacyl-sn-glycero-3-phosphocholine(in) = a 1,2-diacyl-sn-glycero-3-phosphocholine(out). It carries out the reaction a 1,2-diacyl-sn-glycero-3-phosphoethanolamine(in) = a 1,2-diacyl-sn-glycero-3-phosphoethanolamine(out). Its function is as follows. Phospholipid scramblase involved in lipid homeostasis and membrane dynamics processes. Has phospholipid scramblase activity toward cholesterol and phosphatidylserine, as well as phosphatidylethanolamine and phosphatidylcholine. Required for autophagosome formation: participates in early stages of autophagosome biogenesis at the endoplasmic reticulum (ER) membrane by reequilibrating the leaflets of the ER as lipids are extracted by ATG2 (ATG2A or ATG2B) to mediate autophagosome assembly. Regulates ATP2A2 activity to control ER-isolation membrane contacts for autophagosome formation. In addition to autophagy, involved in other processes in which phospholipid scramblase activity is required. Modulates ER contacts with lipid droplets, mitochondria and endosomes. Plays an essential role in formation of cell junctions. Upon stress such as bacterial and viral infection, promotes formation of cytoplasmic vacuoles followed by cell death. Involved in the cytoplasmic vacuolization of acinar cells during the early stage of acute pancreatitis. The chain is Vacuole membrane protein 1 from Mus musculus (Mouse).